A 378-amino-acid polypeptide reads, in one-letter code: Probable tRNA sulfurtransferase (378 aa).

A THUMP domain is found at 51–153; sequence DANLEKLQYV…SDKTYLFSKT (103 aa). ATP contacts are provided by residues 171–172, 196–197, arginine 253, glycine 275, and glutamine 284; these read LM and SF.

Belongs to the ThiI family.

The protein resides in the cytoplasm. The catalysed reaction is [ThiI sulfur-carrier protein]-S-sulfanyl-L-cysteine + a uridine in tRNA + 2 reduced [2Fe-2S]-[ferredoxin] + ATP + H(+) = [ThiI sulfur-carrier protein]-L-cysteine + a 4-thiouridine in tRNA + 2 oxidized [2Fe-2S]-[ferredoxin] + AMP + diphosphate. It carries out the reaction [ThiS sulfur-carrier protein]-C-terminal Gly-Gly-AMP + S-sulfanyl-L-cysteinyl-[cysteine desulfurase] + AH2 = [ThiS sulfur-carrier protein]-C-terminal-Gly-aminoethanethioate + L-cysteinyl-[cysteine desulfurase] + A + AMP + 2 H(+). It participates in cofactor biosynthesis; thiamine diphosphate biosynthesis. Its function is as follows. Catalyzes the ATP-dependent transfer of a sulfur to tRNA to produce 4-thiouridine in position 8 of tRNAs, which functions as a near-UV photosensor. Also catalyzes the transfer of sulfur to the sulfur carrier protein ThiS, forming ThiS-thiocarboxylate. This is a step in the synthesis of thiazole, in the thiamine biosynthesis pathway. The sulfur is donated as persulfide by IscS. In Mycoplasmopsis agalactiae (strain NCTC 10123 / CIP 59.7 / PG2) (Mycoplasma agalactiae), this protein is Probable tRNA sulfurtransferase.